Consider the following 98-residue polypeptide: NADH-ubiquinone oxidoreductase chain 4L (98 aa).

Helical transmembrane passes span 1–21 (MTMV…GLLM), 29–49 (SLLC…VTIL), and 61–81 (IILL…LVMV).

It belongs to the complex I subunit 4L family. In terms of assembly, core subunit of respiratory chain NADH dehydrogenase (Complex I) which is composed of 45 different subunits.

The protein resides in the mitochondrion inner membrane. The enzyme catalyses a ubiquinone + NADH + 5 H(+)(in) = a ubiquinol + NAD(+) + 4 H(+)(out). Its function is as follows. Core subunit of the mitochondrial membrane respiratory chain NADH dehydrogenase (Complex I) which catalyzes electron transfer from NADH through the respiratory chain, using ubiquinone as an electron acceptor. Part of the enzyme membrane arm which is embedded in the lipid bilayer and involved in proton translocation. The protein is NADH-ubiquinone oxidoreductase chain 4L (MT-ND4L) of Leptonychotes weddellii (Weddell seal).